We begin with the raw amino-acid sequence, 435 residues long: D-amino acid dehydrogenase (435 aa).

3–17 (VLILGSGVIGTTSAW) contributes to the FAD binding site.

It belongs to the DadA oxidoreductase family. The cofactor is FAD.

It carries out the reaction a D-alpha-amino acid + A + H2O = a 2-oxocarboxylate + AH2 + NH4(+). Its pathway is amino-acid degradation; D-alanine degradation; NH(3) and pyruvate from D-alanine: step 1/1. Functionally, oxidative deamination of D-amino acids. The chain is D-amino acid dehydrogenase from Xylella fastidiosa (strain 9a5c).